The following is a 325-amino-acid chain: Diacylglycerol acyltransferase/mycolyltransferase Ag85B (325 aa).

The first 40 residues, 1 to 40 (MTDVSRKIRAWGRRLMIGTAAAVVLPGLVGLAGGAATAGA), serve as a signal peptide directing secretion. 82 to 83 (LR) provides a ligand contact to substrate. Positions 98 to 108 (FEWYYQSGLSI) are fibronectin-binding. The cysteines at positions 127 and 132 are disulfide-linked. S166 and D194 together coordinate substrate. S166 acts as the Nucleophile in catalysis. E270 is an active-site residue. Substrate-binding positions include 272–275 (FVRS), K279, and 302–304 (HSW). H302 is an active-site residue.

Belongs to the mycobacterial A85 antigen family.

Its subcellular location is the secreted. It carries out the reaction 2 alpha,alpha'-trehalose 6-mycolate = alpha,alpha'-trehalose 6,6'-bismycolate + alpha,alpha-trehalose. The enzyme catalyses an acyl-CoA + a 1,2-diacyl-sn-glycerol = a triacyl-sn-glycerol + CoA. The antigen 85 proteins (FbpA, FbpB, FbpC) are responsible for the high affinity of mycobacteria for fibronectin, a large adhesive glycoprotein, which facilitates the attachment of M.tuberculosis to murine alveolar macrophages (AMs). They also help to maintain the integrity of the cell wall by catalyzing the transfer of mycolic acids to cell wall arabinogalactan and through the synthesis of alpha,alpha-trehalose dimycolate (TDM, cord factor). They catalyze the transfer of a mycoloyl residue from one molecule of alpha,alpha-trehalose monomycolate (TMM) to another TMM, leading to the formation of TDM. The chain is Diacylglycerol acyltransferase/mycolyltransferase Ag85B (fbpB) from Mycobacterium tuberculosis (strain ATCC 25177 / H37Ra).